The chain runs to 152 residues: Snaclec coagulation factor IX/factor X-binding protein subunit A (152 aa).

The first 23 residues, 1–23 (MGRFIFMSFGLLVVAASLRGTGA), serve as a signal peptide directing secretion. Positions 24–152 (DCLSGWSSYE…GQQNPFVCEA (129 aa)) constitute a C-type lectin domain. Intrachain disulfides connect Cys25/Cys36, Cys53/Cys150, and Cys125/Cys142. Ca(2+) contacts are provided by Ser64, Glu66, and Glu70. Glu151 is a binding site for Ca(2+).

The protein belongs to the snaclec family. In terms of assembly, heterodimer of subunits A and B; disulfide-linked. In terms of tissue distribution, expressed by the venom gland.

Its subcellular location is the secreted. Its function is as follows. Anticoagulant protein which binds to the gamma-carboxyglutamic acid-domain regions of factors IX (F9) and factor X (F10) in the presence of calcium with a 1 to 1 stoichiometry. The polypeptide is Snaclec coagulation factor IX/factor X-binding protein subunit A (Protobothrops flavoviridis (Habu)).